A 1141-amino-acid chain; its full sequence is Eukaryotic translation initiation factor 3 subunit A (1141 aa).

In terms of domain architecture, PCI spans 319 to 501 (LQRMAAHVLL…NSIYFGTDLT (183 aa)). 2 stretches are compositionally biased toward basic and acidic residues: residues 588-623 (QNNA…EERE) and 829-899 (AAEE…RGGD). Disordered stretches follow at residues 588–631 (QNNA…QNEI) and 829–1141 (AAEE…VKRR). Serine 908 carries the post-translational modification Phosphoserine. Basic and acidic residues-rich tracts occupy residues 920-976 (ERND…EPDT), 990-1051 (SRDD…EPQR), 1059-1087 (DAPR…RGDQ), and 1110-1131 (TREE…KAGD).

The protein belongs to the eIF-3 subunit A family. In terms of assembly, component of the eukaryotic translation initiation factor 3 (eIF-3) complex. The eIF-3 complex interacts with pix.

The protein resides in the cytoplasm. Its function is as follows. RNA-binding component of the eukaryotic translation initiation factor 3 (eIF-3) complex, which is involved in protein synthesis of a specialized repertoire of mRNAs and, together with other initiation factors, stimulates binding of mRNA and methionyl-tRNAi to the 40S ribosome. The eIF-3 complex specifically targets and initiates translation of a subset of mRNAs involved in cell proliferation. The chain is Eukaryotic translation initiation factor 3 subunit A from Drosophila simulans (Fruit fly).